The sequence spans 204 residues: Peptide deformylase (204 aa).

Fe cation contacts are provided by C131 and H174. E175 is an active-site residue. Fe cation is bound at residue H178.

The protein belongs to the polypeptide deformylase family. Fe(2+) serves as cofactor.

The catalysed reaction is N-terminal N-formyl-L-methionyl-[peptide] + H2O = N-terminal L-methionyl-[peptide] + formate. Its function is as follows. Removes the formyl group from the N-terminal Met of newly synthesized proteins. Requires at least a dipeptide for an efficient rate of reaction. N-terminal L-methionine is a prerequisite for activity but the enzyme has broad specificity at other positions. The sequence is that of Peptide deformylase from Streptococcus mutans serotype c (strain ATCC 700610 / UA159).